A 57-amino-acid chain; its full sequence is uncharacterized protein (57 aa).

The segment at methionine 1–valine 57 is disordered. Residues histidine 23 to valine 57 show a composition bias toward polar residues.

This is an uncharacterized protein from Ornithodoros (relapsing fever ticks).